We begin with the raw amino-acid sequence, 462 residues long: Glutamate decarboxylase alpha (462 aa).

The residue at position 273 (Lys273) is an N6-(pyridoxal phosphate)lysine.

The protein belongs to the group II decarboxylase family. It depends on pyridoxal 5'-phosphate as a cofactor.

It catalyses the reaction L-glutamate + H(+) = 4-aminobutanoate + CO2. In terms of biological role, converts internalized glutamate to GABA and increases the internal pH. Involved in glutamate-dependent acid resistance in gastric fluid. This chain is Glutamate decarboxylase alpha (gadA), found in Listeria monocytogenes serovar 1/2a (strain ATCC BAA-679 / EGD-e).